The sequence spans 70 residues: U2-agatoxin-Ao1r (70 aa).

The N-terminal stretch at 1-20 (MRSIISLILISAMVFSMIAP) is a signal peptide. Residues 21 to 34 (VPEEERLQLSEDER) constitute a propeptide that is removed on maturation. 3 disulfide bridges follow: Cys-37–Cys-53, Cys-44–Cys-58, and Cys-52–Cys-68. Position 69 is a leucine amide (Leu-69).

The protein belongs to the neurotoxin 01 (U2-agtx) family. In terms of tissue distribution, expressed by the venom gland.

It is found in the secreted. Insect active toxin causing rapid but reversible paralysis in crickets. No activity shown in mammals. Does not show effect on mammalian voltage-gated calcium channels. This is U2-agatoxin-Ao1r from Agelena orientalis (Funnel-web spider).